The chain runs to 352 residues: Rhodopsin (352 aa).

Residues 1–36 are Extracellular-facing; the sequence is MNGTEGPFFYIPMVNTTGIVRSPYEYPQYYLVNPAA. 2 N-linked (GlcNAc...) asparagine glycosylation sites follow: Asn2 and Asn15. The helical transmembrane segment at 37-61 threads the bilayer; that stretch reads YACLGAYMFFLILVGFPVNFLTLYV. Topologically, residues 62–73 are cytoplasmic; sequence TLEHKKLRTPLN. A helical transmembrane segment spans residues 74-96; it reads YILLNLAVADLFMVFGGFTTTMY. The Extracellular segment spans residues 97–110; the sequence is TSMHGYFVLGRLGC. Cys110 and Cys187 are disulfide-bonded. The chain crosses the membrane as a helical span at residues 111 to 133; the sequence is NIEGFFATLGGEIALWSLVVLAI. The short motif at 134 to 136 is the 'Ionic lock' involved in activated form stabilization element; the sequence is ERW. Residues 134–152 are Cytoplasmic-facing; that stretch reads ERWVVVCKPISNFRFGENH. A helical transmembrane segment spans residues 153–173; the sequence is AIMGVAFTWFMASACAVPPLV. Over 174–202 the chain is Extracellular; sequence GWSRYIPEGMQCSCGVDYYTRAEGFNNES. Residue Asn200 is glycosylated (N-linked (GlcNAc...) asparagine). The chain crosses the membrane as a helical span at residues 203–224; the sequence is FVIYMFIVHFCIPLAVVGFCYG. Residues 225-252 lie on the Cytoplasmic side of the membrane; it reads RLLCAVKEAAAAQQESETTQRAEREVSR. Residues 253-274 form a helical membrane-spanning segment; that stretch reads MVVIMVIGFLVCWLPYASVAWY. Topologically, residues 275–286 are extracellular; it reads IFTHQGSEFGPP. A helical membrane pass occupies residues 287–308; that stretch reads FMTVPAFFAKSSSIYNPMIYIC. Lys296 bears the N6-(retinylidene)lysine mark. The Cytoplasmic segment spans residues 309 to 352; the sequence is MNKQFRHCMITTLCCGKNPFEEEEGASTTKTEASSVSSSSVSPA. S-palmitoyl cysteine attachment occurs at residues Cys322 and Cys323. A disordered region spans residues 331–352; the sequence is EEGASTTKTEASSVSSSSVSPA. Over residues 342-352 the composition is skewed to low complexity; sequence SSVSSSSVSPA.

The protein belongs to the G-protein coupled receptor 1 family. Opsin subfamily. In terms of processing, phosphorylated on some or all of the serine and threonine residues present in the C-terminal region. Contains one covalently linked retinal chromophore.

It is found in the membrane. The protein localises to the cell projection. It localises to the cilium. The protein resides in the photoreceptor outer segment. Its function is as follows. Photoreceptor required for image-forming vision at low light intensity. While most salt water fish species use retinal as chromophore, most freshwater fish use 3-dehydroretinal, or a mixture of retinal and 3-dehydroretinal. Light-induced isomerization of 11-cis to all-trans retinal triggers a conformational change that activates signaling via G-proteins. Subsequent receptor phosphorylation mediates displacement of the bound G-protein alpha subunit by arrestin and terminates signaling. The sequence is that of Rhodopsin (rho) from Zosterisessor ophiocephalus (Grass goby).